Consider the following 356-residue polypeptide: UDP-N-acetylglucosamine--N-acetylmuramyl-(pentapeptide) pyrophosphoryl-undecaprenol N-acetylglucosamine transferase (356 aa).

UDP-N-acetyl-alpha-D-glucosamine contacts are provided by S195 and Q287.

It belongs to the glycosyltransferase 28 family. MurG subfamily.

The protein resides in the cell membrane. The catalysed reaction is Mur2Ac(oyl-L-Ala-gamma-D-Glu-L-Lys-D-Ala-D-Ala)-di-trans,octa-cis-undecaprenyl diphosphate + UDP-N-acetyl-alpha-D-glucosamine = beta-D-GlcNAc-(1-&gt;4)-Mur2Ac(oyl-L-Ala-gamma-D-Glu-L-Lys-D-Ala-D-Ala)-di-trans,octa-cis-undecaprenyl diphosphate + UDP + H(+). It functions in the pathway cell wall biogenesis; peptidoglycan biosynthesis. Functionally, cell wall formation. Catalyzes the transfer of a GlcNAc subunit on undecaprenyl-pyrophosphoryl-MurNAc-pentapeptide (lipid intermediate I) to form undecaprenyl-pyrophosphoryl-MurNAc-(pentapeptide)GlcNAc (lipid intermediate II). The sequence is that of UDP-N-acetylglucosamine--N-acetylmuramyl-(pentapeptide) pyrophosphoryl-undecaprenol N-acetylglucosamine transferase from Streptococcus gordonii (strain Challis / ATCC 35105 / BCRC 15272 / CH1 / DL1 / V288).